Reading from the N-terminus, the 186-residue chain is UPF0397 protein lp_0150 (186 aa).

A run of 5 helical transmembrane segments spans residues valine 12–proline 32, glycine 45–isoleucine 65, glycine 76–alanine 96, leucine 112–proline 132, and valine 151–leucine 171.

The protein belongs to the UPF0397 family.

It localises to the cell membrane. This chain is UPF0397 protein lp_0150, found in Lactiplantibacillus plantarum (strain ATCC BAA-793 / NCIMB 8826 / WCFS1) (Lactobacillus plantarum).